A 76-amino-acid polypeptide reads, in one-letter code: Conotoxin Cal29b (76 aa).

The signal sequence occupies residues 1–43 (MKLTCVLIVAVLILAACQFTAANMARYGKTQIARSDVKSIDAR).

The protein belongs to the conotoxin O1 superfamily. May contain 4 disulfide bonds. Expressed by the venom duct.

The protein resides in the secreted. Its function is as follows. Is able to inhibit the growth of Mycobacterium tuberculosis (MIC=0.22-3.52 uM against strain H37Rv and 2 multidrug-resistant strains). May also show neurotoxic activity. The polypeptide is Conotoxin Cal29b (Californiconus californicus (California cone)).